Here is a 132-residue protein sequence, read N- to C-terminus: Transcription antitermination protein NusB (132 aa).

Belongs to the NusB family.

Functionally, involved in transcription antitermination. Required for transcription of ribosomal RNA (rRNA) genes. Binds specifically to the boxA antiterminator sequence of the ribosomal RNA (rrn) operons. The polypeptide is Transcription antitermination protein NusB (Lachnoclostridium phytofermentans (strain ATCC 700394 / DSM 18823 / ISDg) (Clostridium phytofermentans)).